The primary structure comprises 403 residues: Neuromedin U receptor homolog nmur-2 (403 aa).

Topologically, residues 1–27 are extracellular; it reads MSQCTVEYNVSEITEYVLSTLGERCQS. The helical transmembrane segment at 28–48 threads the bilayer; the sequence is AGIVIPTVIIYGTIFLLGLFG. Residues 49 to 68 are Cytoplasmic-facing; the sequence is NICTCIVIAANKSMHNPTNY. Residues 69–89 traverse the membrane as a helical segment; it reads YLFSLAVSDIIALILGLPMEF. The Extracellular portion of the chain corresponds to 90 to 109; it reads YQSLDYSYPYRFSEGICKAR. The chain crosses the membrane as a helical span at residues 110 to 130; it reads AFLIEFTSYASIMIICCFSFE. Residues 131–151 are Cytoplasmic-facing; sequence RWLAICHPLRSKIFSTLWRAN. The helical transmembrane segment at 152-172 threads the bilayer; it reads VLIILAWTISFVCALPIAFIV. Residues 173 to 216 are Extracellular-facing; the sequence is QINKLPLPEDAKYQPWTNKVSTDGIFVLHTEFCAMNQSRPDQQK. The chain crosses the membrane as a helical span at residues 217-237; it reads MIIIFAFTVFFVIPAIAIVIM. The Cytoplasmic segment spans residues 238 to 268; the sequence is YAHIAVQLESSEIDLKGDKMVKKRRNKSNRT. The chain crosses the membrane as a helical span at residues 269–289; sequence VLKMLLSVVITFFICWLPFHI. The Extracellular portion of the chain corresponds to 290-304; that stretch reads QRLLSVYTTWSETTT. A helical membrane pass occupies residues 305–325; sequence ISPPVQFLSMIVFYISGFCYY. The Cytoplasmic segment spans residues 326 to 403; it reads SNSAANPILY…PHRKLEVHNY (78 aa).

The protein belongs to the G-protein coupled receptor 1 family.

The protein localises to the membrane. Its function is as follows. Putative G protein-coupled receptor for pyrokinin-like neuropeptide derived from the processing of the neuropeptide precursor capa-1. The sequence is that of Neuromedin U receptor homolog nmur-2 from Caenorhabditis elegans.